Reading from the N-terminus, the 216-residue chain is MVGRLSLQDVPELVDTKKKGDGVLDSPDSGLPPSPSPSHWGLAAATGGGGERAPVAGTLEPDATVTSVVPNPASLSHSLAGICSPRLCPLSFGEGVEFDPLPPKEIKYTSSVKYDSERHFIDDVQMPLGLVVASCSQTVTCIPNCTWRNYKAEVRFEPRHKPARFLSTTIIYPKYPKTVYTTTLDYNCHKKLRRFLSSVELEATEFLGSDGLLDEC.

Residues 1 to 52 (MVGRLSLQDVPELVDTKKKGDGVLDSPDSGLPPSPSPSHWGLAAATGGGGER) are disordered. A phosphoserine mark is found at serine 6 and serine 26.

Belongs to the Refilin family. Interacts with FLNA and FLNB.

It is found in the cytoplasm. Its subcellular location is the cytoskeleton. In terms of biological role, involved in the regulation of the perinuclear actin network and nuclear shape through interaction with filamins. Plays an essential role in the formation of cartilaginous skeletal elements. This Rattus norvegicus (Rat) protein is Refilin-B.